The chain runs to 350 residues: Ion-translocating oxidoreductase complex subunit D (350 aa).

The next 5 helical transmembrane spans lie at Ile-20–Gly-40, Gly-42–Leu-62, Pro-68–Ser-88, Ile-89–Ala-109, and Pro-123–Leu-143. Residue Thr-187 is modified to FMN phosphoryl threonine. 5 helical membrane-spanning segments follow: residues Leu-215–Leu-235, Ile-244–Gly-264, Leu-267–Leu-287, Leu-301–Pro-321, and Asp-322–Thr-342.

This sequence belongs to the NqrB/RnfD family. As to quaternary structure, the complex is composed of six subunits: RnfA, RnfB, RnfC, RnfD, RnfE and RnfG. FMN serves as cofactor.

It is found in the cell inner membrane. In terms of biological role, part of a membrane-bound complex that couples electron transfer with translocation of ions across the membrane. The protein is Ion-translocating oxidoreductase complex subunit D of Citrobacter koseri (strain ATCC BAA-895 / CDC 4225-83 / SGSC4696).